The primary structure comprises 536 residues: Nuclear hormone receptor family member nhr-7 (536 aa).

The nuclear receptor DNA-binding region spans 6–82 (NRICAVCGDT…VGMNPDYVRP (77 aa)). 2 consecutive NR C4-type zinc fingers follow at residues 9 to 29 (CAVC…CFGC) and 46 to 70 (CRFE…FRKC). In terms of domain architecture, NR LBD spans 155 to 378 (ADRSLARKTG…PFHKILTDII (224 aa)). Positions 427-465 (SPCQISAPPPPQQQYTDYSQMPSTSSYPANSSPFQSPYR) are disordered. Polar residues predominate over residues 439-465 (QQYTDYSQMPSTSSYPANSSPFQSPYR).

Belongs to the nuclear hormone receptor family.

Its subcellular location is the nucleus. Its function is as follows. Orphan nuclear receptor. This chain is Nuclear hormone receptor family member nhr-7 (nhr-7), found in Caenorhabditis elegans.